A 34-amino-acid chain; its full sequence is Cytochrome c oxidase polypeptide 2A (34 aa).

N-formylmethionine is present on M1. Residues 4–34 traverse the membrane as a helical segment; it reads KPKGALAVILVLTLTILVFWLGVYAVFFARG.

Its subcellular location is the cell membrane. The enzyme catalyses 4 Fe(II)-[cytochrome c] + O2 + 8 H(+)(in) = 4 Fe(III)-[cytochrome c] + 2 H2O + 4 H(+)(out). This is Cytochrome c oxidase polypeptide 2A (cbaD) from Thermus thermophilus (strain ATCC 27634 / DSM 579 / HB8).